The following is a 292-amino-acid chain: Homoserine kinase (292 aa).

ATP is bound at residue 84-94; the sequence is PLARGMGSSSA.

It belongs to the GHMP kinase family. Homoserine kinase subfamily.

It localises to the cytoplasm. The enzyme catalyses L-homoserine + ATP = O-phospho-L-homoserine + ADP + H(+). It participates in amino-acid biosynthesis; L-threonine biosynthesis; L-threonine from L-aspartate: step 4/5. In terms of biological role, catalyzes the ATP-dependent phosphorylation of L-homoserine to L-homoserine phosphate. The chain is Homoserine kinase from Thermus thermophilus (strain ATCC BAA-163 / DSM 7039 / HB27).